The chain runs to 429 residues: tRNA-2-methylthio-N(6)-dimethylallyladenosine synthase (429 aa).

The MTTase N-terminal domain occupies K2 to F115. The [4Fe-4S] cluster site is built by C11, C46, C78, C147, C151, and C154. Positions R133–E365 constitute a Radical SAM core domain. The TRAM domain maps to K368–A429.

Belongs to the methylthiotransferase family. MiaB subfamily. Monomer. Requires [4Fe-4S] cluster as cofactor.

It is found in the cytoplasm. The catalysed reaction is N(6)-dimethylallyladenosine(37) in tRNA + (sulfur carrier)-SH + AH2 + 2 S-adenosyl-L-methionine = 2-methylsulfanyl-N(6)-dimethylallyladenosine(37) in tRNA + (sulfur carrier)-H + 5'-deoxyadenosine + L-methionine + A + S-adenosyl-L-homocysteine + 2 H(+). Functionally, catalyzes the methylthiolation of N6-(dimethylallyl)adenosine (i(6)A), leading to the formation of 2-methylthio-N6-(dimethylallyl)adenosine (ms(2)i(6)A) at position 37 in tRNAs that read codons beginning with uridine. The polypeptide is tRNA-2-methylthio-N(6)-dimethylallyladenosine synthase (Campylobacter hominis (strain ATCC BAA-381 / DSM 21671 / CCUG 45161 / LMG 19568 / NCTC 13146 / CH001A)).